The sequence spans 476 residues: Ribulose bisphosphate carboxylase large chain (476 aa).

Substrate contacts are provided by N124 and T174. K176 serves as the catalytic Proton acceptor. Position 178 (K178) interacts with substrate. 3 residues coordinate Mg(2+): K202, D204, and E205. N6-carboxylysine is present on K202. H295 (proton acceptor) is an active-site residue. R296, H328, and S380 together coordinate substrate.

It belongs to the RuBisCO large chain family. Type I subfamily. Heterohexadecamer of 8 large chains and 8 small chains; disulfide-linked. The disulfide link is formed within the large subunit homodimers. Mg(2+) is required as a cofactor. In terms of processing, the disulfide bond which can form in the large chain dimeric partners within the hexadecamer appears to be associated with oxidative stress and protein turnover.

It is found in the carboxysome. The catalysed reaction is 2 (2R)-3-phosphoglycerate + 2 H(+) = D-ribulose 1,5-bisphosphate + CO2 + H2O. It catalyses the reaction D-ribulose 1,5-bisphosphate + O2 = 2-phosphoglycolate + (2R)-3-phosphoglycerate + 2 H(+). RuBisCO catalyzes two reactions: the carboxylation of D-ribulose 1,5-bisphosphate, the primary event in carbon dioxide fixation, as well as the oxidative fragmentation of the pentose substrate in the photorespiration process. Both reactions occur simultaneously and in competition at the same active site. The polypeptide is Ribulose bisphosphate carboxylase large chain (Acaryochloris marina (strain MBIC 11017)).